A 117-amino-acid polypeptide reads, in one-letter code: NADH-ubiquinone oxidoreductase chain 3 (117 aa).

3 helical membrane passes run 8 to 28 (LIYF…SFIF), 61 to 81 (LVAI…PWAV), and 86 to 106 (IGFF…IGFI).

Belongs to the complex I subunit 3 family.

Its subcellular location is the mitochondrion membrane. It catalyses the reaction a ubiquinone + NADH + 5 H(+)(in) = a ubiquinol + NAD(+) + 4 H(+)(out). Its function is as follows. Core subunit of the mitochondrial membrane respiratory chain NADH dehydrogenase (Complex I) that is believed to belong to the minimal assembly required for catalysis. Complex I functions in the transfer of electrons from NADH to the respiratory chain. The immediate electron acceptor for the enzyme is believed to be ubiquinone. The protein is NADH-ubiquinone oxidoreductase chain 3 (ND3) of Tetraselmis subcordiformis (Marine green alga).